The sequence spans 209 residues: MSGSSERELAAIVRDLGCGPYFLGTHDKRFPGFLAGDKLACAIVNTAGRETGGVHWLAFGWNPRSRTCYMFDPFGFSDRRLKQIYSFEYEAMLRRSALASSPDRCLSLEQSTQTVQGPDSAACGLFCCMFLHAFVHWPDRPMDGNPTMNLLTGVPNGMLQSPQVLPTLRRNQEELYRFLARHSPYFRSHRAAIEHATAFDKMKQLRVSQ.

Residues histidine 55, aspartate 72, and cysteine 123 contribute to the active site.

This sequence belongs to the peptidase C5 family. As to quaternary structure, interacts with protease cofactor pVI-C; this interaction is necessary for protease activation.

The protein resides in the virion. Its subcellular location is the host nucleus. The catalysed reaction is Cleaves proteins of the adenovirus and its host cell at two consensus sites: -Yaa-Xaa-Gly-Gly-|-Xaa- and -Yaa-Xaa-Gly-Xaa-|-Gly- (in which Yaa is Met, Ile or Leu, and Xaa is any amino acid).. Its activity is regulated as follows. Requires DNA and protease cofactor for maximal activation. Inside nascent virions, becomes partially activated by binding to the viral DNA, allowing it to cleave the cofactor that binds to the protease and fully activates it. Actin, like the viral protease cofactor, seems to act as a cofactor in the cleavage of cytokeratin 18 and of actin itself. Cleaves viral precursor proteins (pTP, pIIIa, pVI, pVII, pVIII, and pX) inside newly assembled particles giving rise to mature virions. Protease complexed to its cofactor slides along the viral DNA to specifically locate and cleave the viral precursors. Mature virions have a weakened organization compared to the unmature virions, thereby facilitating subsequent uncoating. Without maturation, the particle lacks infectivity and is unable to uncoat. Late in adenovirus infection, in the cytoplasm, may participate in the cytoskeleton destruction. Cleaves host cell cytoskeletal keratins K7 and K18. In Human adenovirus D serotype 9 (HAdV-9), this protein is Protease.